A 284-amino-acid polypeptide reads, in one-letter code: Ribosomal RNA small subunit methyltransferase A (284 aa).

Residues H23, L25, G50, E71, D92, and N121 each coordinate S-adenosyl-L-methionine.

It belongs to the class I-like SAM-binding methyltransferase superfamily. rRNA adenine N(6)-methyltransferase family. RsmA subfamily.

It is found in the cytoplasm. It carries out the reaction adenosine(1518)/adenosine(1519) in 16S rRNA + 4 S-adenosyl-L-methionine = N(6)-dimethyladenosine(1518)/N(6)-dimethyladenosine(1519) in 16S rRNA + 4 S-adenosyl-L-homocysteine + 4 H(+). Specifically dimethylates two adjacent adenosines (A1518 and A1519) in the loop of a conserved hairpin near the 3'-end of 16S rRNA in the 30S particle. May play a critical role in biogenesis of 30S subunits. The chain is Ribosomal RNA small subunit methyltransferase A from Verminephrobacter eiseniae (strain EF01-2).